The following is a 370-amino-acid chain: GTPase Obg (370 aa).

The Obg domain maps to 1-159 (MKFIDEARIE…RMVRLELKVL (159 aa)). A disordered region spans residues 127 to 147 (NLHFKSSTNRAPRQKTDGKPG). An OBG-type G domain is found at 160–334 (ADVGLLGMPN…LCYAVYDYLA (175 aa)). GTP contacts are provided by residues 166–173 (GMPNAGKS), 191–195 (FTTLA), 213–216 (DIPG), 284–287 (NKLD), and 315–317 (SAL). Mg(2+)-binding residues include Ser173 and Thr193.

This sequence belongs to the TRAFAC class OBG-HflX-like GTPase superfamily. OBG GTPase family. As to quaternary structure, monomer. It depends on Mg(2+) as a cofactor.

Its subcellular location is the cytoplasm. Its function is as follows. An essential GTPase which binds GTP, GDP and possibly (p)ppGpp with moderate affinity, with high nucleotide exchange rates and a fairly low GTP hydrolysis rate. Plays a role in control of the cell cycle, stress response, ribosome biogenesis and in those bacteria that undergo differentiation, in morphogenesis control. This Paraburkholderia phymatum (strain DSM 17167 / CIP 108236 / LMG 21445 / STM815) (Burkholderia phymatum) protein is GTPase Obg.